Here is a 259-residue protein sequence, read N- to C-terminus: Putative carbamate hydrolase RutD (259 aa).

This sequence belongs to the AB hydrolase superfamily. Hydrolase RutD family.

It carries out the reaction carbamate + 2 H(+) = NH4(+) + CO2. In terms of biological role, involved in pyrimidine catabolism. May facilitate the hydrolysis of carbamate, a reaction that can also occur spontaneously. The protein is Putative carbamate hydrolase RutD of Pseudomonas syringae pv. syringae (strain B728a).